Reading from the N-terminus, the 72-residue chain is Translation initiation factor IF-1 (72 aa).

Positions 1-72 (MSKNDVIEVE…TRGRIVYRFK (72 aa)) constitute an S1-like domain.

Belongs to the IF-1 family. In terms of assembly, component of the 30S ribosomal translation pre-initiation complex which assembles on the 30S ribosome in the order IF-2 and IF-3, IF-1 and N-formylmethionyl-tRNA(fMet); mRNA recruitment can occur at any time during PIC assembly.

It localises to the cytoplasm. One of the essential components for the initiation of protein synthesis. Stabilizes the binding of IF-2 and IF-3 on the 30S subunit to which N-formylmethionyl-tRNA(fMet) subsequently binds. Helps modulate mRNA selection, yielding the 30S pre-initiation complex (PIC). Upon addition of the 50S ribosomal subunit IF-1, IF-2 and IF-3 are released leaving the mature 70S translation initiation complex. The chain is Translation initiation factor IF-1 from Desulforamulus reducens (strain ATCC BAA-1160 / DSM 100696 / MI-1) (Desulfotomaculum reducens).